The sequence spans 299 residues: Zinc finger protein 414 (299 aa).

Composition is skewed to polar residues over residues Met-1–Asn-20 and Ser-70–Val-80. Residues Met-1 to Ser-102 are disordered. 2 consecutive C2H2-type zinc fingers follow at residues Ile-99 to His-123 and Phe-135 to His-159. Residues Phe-166–Asp-190 form a C2H2-type 3; degenerate zinc finger. Disordered stretches follow at residues Gln-193–Leu-228 and Pro-254–Arg-299. Residues Leu-203–Glu-215 are compositionally biased toward basic and acidic residues. Residues Asp-217–Leu-228 show a composition bias toward low complexity. Over residues Thr-268–Arg-285 the composition is skewed to polar residues.

Belongs to the krueppel C2H2-type zinc-finger protein family.

The protein localises to the nucleus. In terms of biological role, may be involved in transcriptional regulation. The sequence is that of Zinc finger protein 414 (Znf414) from Rattus norvegicus (Rat).